A 335-amino-acid chain; its full sequence is Putative SWIB domain-containing protein R508 (335 aa).

Residues 1–12 (MSKRVTSSKKSK) are compositionally biased toward basic residues. A disordered region spans residues 1–182 (MSKRVTSSKK…NKKSPKKLLN (182 aa)). Over residues 24-33 (KNLSKTSKSV) the composition is skewed to low complexity. A compositionally biased stretch (polar residues) spans 60-75 (NIGGSKSSRTYNSEGS). The span at 83 to 109 (SSKDSKVIKKNKQKVESSDSEKHSENK) shows a compositional bias: basic and acidic residues. Residues 110–126 (SHKKSSKSSSISRKKPI) show a composition bias toward basic residues. The span at 163–173 (KGEDNNDEKQN) shows a compositional bias: basic and acidic residues. The stretch at 181–217 (LNEKKISSESFDDKLNELREELRENYIRQKKIMNDIK) forms a coiled coil. The SWIB/MDM2 domain occupies 244 to 326 (GFNKPQTVPQ…QTWLKKVYNE (83 aa)).

This Acanthamoeba polyphaga mimivirus (APMV) protein is Putative SWIB domain-containing protein R508.